Here is a 276-residue protein sequence, read N- to C-terminus: Diaminopimelate epimerase (276 aa).

The substrate site is built by asparagine 13, glutamine 46, and asparagine 66. The active-site Proton donor is the cysteine 75. Residues glycine 76–asparagine 77, asparagine 159, asparagine 192, and glutamate 210–arginine 211 contribute to the substrate site. Cysteine 219 serves as the catalytic Proton acceptor. Glycine 220 to serine 221 lines the substrate pocket.

The protein belongs to the diaminopimelate epimerase family. As to quaternary structure, homodimer.

The protein resides in the cytoplasm. The catalysed reaction is (2S,6S)-2,6-diaminopimelate = meso-2,6-diaminopimelate. It functions in the pathway amino-acid biosynthesis; L-lysine biosynthesis via DAP pathway; DL-2,6-diaminopimelate from LL-2,6-diaminopimelate: step 1/1. Catalyzes the stereoinversion of LL-2,6-diaminopimelate (L,L-DAP) to meso-diaminopimelate (meso-DAP), a precursor of L-lysine and an essential component of the bacterial peptidoglycan. This chain is Diaminopimelate epimerase, found in Vibrio atlanticus (strain LGP32) (Vibrio splendidus (strain Mel32)).